The sequence spans 516 residues: D-aminopeptidase (516 aa).

The active-site Nucleophile is the Ser-61. The active-site Proton donor/acceptor is the Lys-64. The segment at Arg-476–Asp-486 is important for specificity. Residue Asp-480 coordinates substrate.

This sequence belongs to the peptidase S12 family. As to quaternary structure, homodimer.

The catalysed reaction is Release of an N-terminal D-amino acid from a peptide, Xaa-|-Yaa-, in which Xaa is preferably D-Ala, D-Ser or D-Thr. D-amino acid amides and methyl esters also are hydrolyzed, as is glycine amide.. Inhibited by beta-lactam compounds such as 6-aminopenicillic acid, 7-aminocephalosporanic acid, benzylpenicillin and ampicillin. Inhibited by p-chloromercuribenzoate. In terms of biological role, hydrolyzes N-terminal residues in D-amino acid-containing peptides. This is D-aminopeptidase from Cereibacter sphaeroides (strain ATCC 17023 / DSM 158 / JCM 6121 / CCUG 31486 / LMG 2827 / NBRC 12203 / NCIMB 8253 / ATH 2.4.1.) (Rhodobacter sphaeroides).